The following is a 582-amino-acid chain: Aspartate--tRNA(Asp/Asn) ligase (582 aa).

Residue Glu-177 coordinates L-aspartate. The tract at residues 201 to 204 (QLFK) is aspartate. Arg-223 serves as a coordination point for L-aspartate. Residues 223–225 (RDE) and Gln-232 each bind ATP. His-447 contributes to the L-aspartate binding site. Glu-481 lines the ATP pocket. Residue Arg-488 coordinates L-aspartate. 533 to 536 (GLDR) serves as a coordination point for ATP.

Belongs to the class-II aminoacyl-tRNA synthetase family. Type 1 subfamily. As to quaternary structure, homodimer.

Its subcellular location is the cytoplasm. The enzyme catalyses tRNA(Asx) + L-aspartate + ATP = L-aspartyl-tRNA(Asx) + AMP + diphosphate. In terms of biological role, aspartyl-tRNA synthetase with relaxed tRNA specificity since it is able to aspartylate not only its cognate tRNA(Asp) but also tRNA(Asn). Reaction proceeds in two steps: L-aspartate is first activated by ATP to form Asp-AMP and then transferred to the acceptor end of tRNA(Asp/Asn). This Chlamydia muridarum (strain MoPn / Nigg) protein is Aspartate--tRNA(Asp/Asn) ligase.